Reading from the N-terminus, the 230-residue chain is Nucleoside diphosphate kinase 2, chloroplastic (230 aa).

Residues 1–64 (MEAMAVFSGS…SYPKTFRTRS (64 aa)) constitute a chloroplast transit peptide. Lys-90, Phe-138, Arg-166, Thr-172, Arg-183, and Asn-193 together coordinate ATP. Residue His-196 is the Pros-phosphohistidine intermediate of the active site.

The protein belongs to the NDK family. Mg(2+) serves as cofactor.

It localises to the plastid. The protein localises to the chloroplast. The enzyme catalyses a 2'-deoxyribonucleoside 5'-diphosphate + ATP = a 2'-deoxyribonucleoside 5'-triphosphate + ADP. The catalysed reaction is a ribonucleoside 5'-diphosphate + ATP = a ribonucleoside 5'-triphosphate + ADP. Functionally, major role in the synthesis of nucleoside triphosphates other than ATP. The ATP gamma phosphate is transferred to the NDP beta phosphate via a ping-pong mechanism, using a phosphorylated active-site intermediate. This Pisum sativum (Garden pea) protein is Nucleoside diphosphate kinase 2, chloroplastic (NDPK2).